The following is a 189-amino-acid chain: Large ribosomal subunit protein eL18 (189 aa).

It belongs to the eukaryotic ribosomal protein eL18 family.

The protein resides in the cytoplasm. The protein is Large ribosomal subunit protein eL18 (RpL18) of Aedes aegypti (Yellowfever mosquito).